The sequence spans 767 residues: Receptor-type tyrosine-protein phosphatase-like ida-1 (767 aa).

The first 19 residues, 1-19 (MRFFHSIIVLLFSISTGSA), serve as a signal peptide directing secretion. Over 20 to 398 (FLLYGCNLSE…SLPVESSERD (379 aa)) the chain is Lumenal. Asn26 and Asn146 each carry an N-linked (GlcNAc...) asparagine glycan. The chain crosses the membrane as a helical span at residues 399 to 419 (WLLMPVLFVCAFTVTALGLVA). The Cytoplasmic segment spans residues 420-767 (AVQIARSRRH…NHLLKSIATK (348 aa)). Positions 527-756 (SQNRTILPFD…KLVYGCVAQE (230 aa)) constitute a Tyrosine-protein phosphatase domain.

This sequence belongs to the protein-tyrosine phosphatase family. Receptor class 8 subfamily. Post-translationally, proteolytically cleaved probably at a dibasic consensus sequence by egl-3. As to expression, in hermaphrodites specifically expressed in neurons and in particular in the head nerve ring (ADE, ALA, ASI, ASK, AUA, ASG, AVH and AVJ neurons), in the ventral nerve cord, pre-anal ganglia (PVP neuron), in the tail (PHA, PHB and PHC neurons) and in vulval motor neurons VC and HSN and the vulval uv1 cells. In males, also expressed in neurons anterior to the nerve ring and male-specific neurons in the tail.

It is found in the cytoplasmic vesicle membrane. Its subcellular location is the perikaryon. The protein resides in the cell projection. It localises to the axon. The protein localises to the dendrite. In terms of biological role, regulates dense-core vesicle (DCV) trafficking and/or secretion. Probably by controlling DCV trafficking, plays a role in the AVG neuron-mediated formation of the right axon tract of the ventral nerve cord. Involved in locomotion by regulating acetylcholine release. Probably by controlling the secretion of FLP neuropeptides, regulates the turning step of male mating behavior. Plays a role in preventing dauer formation. The chain is Receptor-type tyrosine-protein phosphatase-like ida-1 from Caenorhabditis elegans.